A 382-amino-acid polypeptide reads, in one-letter code: Sphingoid long-chain base transporter RSB1 (382 aa).

At 1 to 34 the chain is on the extracellular side; it reads MSNATNNTLGSLLPQLEAAANSNSLYGGMVPNLR. 2 N-linked (GlcNAc...) asparagine glycosylation sites follow: Asn-3 and Asn-6. Residues 35–55 form a helical membrane-spanning segment; the sequence is FNITMIVIWGILLTIHVVQLL. At 56–57 the chain is on the cytoplasmic side; sequence MR. A helical membrane pass occupies residues 58–78; it reads QYWFSIAFICTGILEVLGFIG. The Extracellular segment spans residues 79 to 90; it reads RTWSHSNVADMD. A helical transmembrane segment spans residues 91 to 111; that stretch reads AFLLNMICLTIAPVFTMGGIY. Residues 112–135 are Cytoplasmic-facing; the sequence is YQLAKLIEVYGHRFSLLPSPMAYS. A helical membrane pass occupies residues 136–156; it reads FIFICSDIVSLVVQAVGGGLC. Topologically, residues 157–171 are extracellular; that stretch reads GVAVTDGTSTTTGNH. A helical transmembrane segment spans residues 172-192; it reads VFIAGLAIQVASMAIFLMLWF. Topologically, residues 193–241 are cytoplasmic; sequence HFLFRIYISVRWEHINSRPISLSLLKISQTEVDYLYREKFHFLRLEPKR. The helical transmembrane segment at 242-262 threads the bilayer; sequence WVFHYFNLAITVAVLTIFTRC. Over 263-281 the chain is Extracellular; the sequence is CYRLAELVVGWDGYLITHE. Residues 282 to 302 form a helical membrane-spanning segment; that stretch reads WYFIILDALMMAIATVTLTIF. Residues 303-382 lie on the Cytoplasmic side of the membrane; it reads HPGFAFKGKS…LFSSKKKAKL (80 aa).

Belongs to the lipid-translocating exporter (LTE) (TC 9.A.26.1) family.

It localises to the cell membrane. Its function is as follows. Catalyzes the ATP-dependent translocation of sphingoid long-chain bases (LCBs) from the cytoplasmic site toward the extracytoplasmic side of the membrane (flip-flop). Involved in the establishment of the functional lipid asymmetry of the plasma membrane. Regulates intracellular levels of LCBs, sphingolipid precursors that are growth inhibitory at increased levels. The polypeptide is Sphingoid long-chain base transporter RSB1 (RSB1) (Saccharomyces cerevisiae (strain JAY291) (Baker's yeast)).